Consider the following 599-residue polypeptide: Elongation factor 4 (599 aa).

One can recognise a tr-type G domain in the interval 4–186; it reads ENIRNFSIIA…EIVTKIPPPQ (183 aa). Residues 16–21 and 133–136 contribute to the GTP site; these read DHGKST and NKID.

Belongs to the TRAFAC class translation factor GTPase superfamily. Classic translation factor GTPase family. LepA subfamily.

The protein resides in the cell inner membrane. It catalyses the reaction GTP + H2O = GDP + phosphate + H(+). Its function is as follows. Required for accurate and efficient protein synthesis under certain stress conditions. May act as a fidelity factor of the translation reaction, by catalyzing a one-codon backward translocation of tRNAs on improperly translocated ribosomes. Back-translocation proceeds from a post-translocation (POST) complex to a pre-translocation (PRE) complex, thus giving elongation factor G a second chance to translocate the tRNAs correctly. Binds to ribosomes in a GTP-dependent manner. In Geotalea uraniireducens (strain Rf4) (Geobacter uraniireducens), this protein is Elongation factor 4.